The following is a 90-amino-acid chain: UPF0213 protein lmo0166 (90 aa).

Positions 5-80 (SEHFFYVLKC…KKLSRKNKDA (76 aa)) constitute a GIY-YIG domain.

It belongs to the UPF0213 family.

This is UPF0213 protein lmo0166 from Listeria monocytogenes serovar 1/2a (strain ATCC BAA-679 / EGD-e).